Reading from the N-terminus, the 1206-residue chain is DNA polymerase beta (1206 aa).

Tandem repeats lie at residues A1071 to P1074, A1075 to P1078, A1079 to P1082, and A1083 to A1086. The tract at residues A1071 to A1086 is 4 X 4 AA tandem repeats of A-G-[NK]-[PA].

It belongs to the DNA polymerase type-B family.

The catalysed reaction is DNA(n) + a 2'-deoxyribonucleoside 5'-triphosphate = DNA(n+1) + diphosphate. DNA-directed DNA polymerase involved in viral DNA replication. The sequence is that of DNA polymerase beta from Ornithodoros (relapsing fever ticks).